Reading from the N-terminus, the 90-residue chain is U7-theraphotoxin-Hhn1f (90 aa).

A signal peptide spans 1-19 (MKTAIFTVVLALAVFAVLS). The propeptide occupies 20 to 50 (FGWEANEKALSEEFTELIHEKEAASETEARG). 3 disulfide bridges follow: Cys-51–Cys-65, Cys-58–Cys-70, and Cys-64–Cys-81.

Belongs to the neurotoxin 10 (Hwtx-1) family. 13 (Hntx-13) subfamily. As to expression, expressed by the venom gland.

The protein localises to the secreted. Functionally, ion channel inhibitor. The sequence is that of U7-theraphotoxin-Hhn1f from Cyriopagopus hainanus (Chinese bird spider).